Here is a 497-residue protein sequence, read N- to C-terminus: MDAMKYNDLRDFLTLLEQQGELKRITLPVDPHLEITEIADRTLRAGGPALLFENPKGYSMPVLCNLFGTPKRVAMGMGQEDVSALREVGKLLAFLKEPEPPKGFRDLFDKLPQFKQVLNMPTKRLRGAPCQQKIVSGDDVDLNRIPIMTCWPEDAAPLITWGLTVTRGPHKERQNLGIYRQQLIGKNKLIMRWLSHRGGALDYQEWCAAHPGERFPISVALGADPATILGAVTPVPDTLSEYAFAGLLRGTKTEVVKCISNDLEVPASAEIVLEGYIEQGEMAPEGPYGDHTGYYNEVDSFPVFTVTHITQREDAIYHSTYTGRPPDEPAVLGVALNEVFVPILQKQFPEIVDFYLPPEGCSYRLAVVTIKKQYAGHAKRVMMGVWSFLRQFMYTKFVIVCDDDVNARDWNDVIWAITTRMDPARDTVLVENTPIDYLDFASPVSGLGSKMGLDATNKWPGETQREWGRPIKKDPDVVAHIDAIWDELAIFNNGKSA.

N175 lines the Mn(2+) pocket. Prenylated FMN-binding positions include 178-180 (IYR), 192-194 (RWL), and 197-198 (RG). A Mn(2+)-binding site is contributed by E241. D290 functions as the Proton donor in the catalytic mechanism.

This sequence belongs to the UbiD family. As to quaternary structure, homohexamer. It depends on prenylated FMN as a cofactor. Mn(2+) serves as cofactor.

It localises to the cell membrane. It catalyses the reaction a 4-hydroxy-3-(all-trans-polyprenyl)benzoate + H(+) = a 2-(all-trans-polyprenyl)phenol + CO2. The protein operates within cofactor biosynthesis; ubiquinone biosynthesis. Catalyzes the decarboxylation of 3-octaprenyl-4-hydroxy benzoate to 2-octaprenylphenol, an intermediate step in ubiquinone biosynthesis. This Escherichia coli O157:H7 protein is 3-octaprenyl-4-hydroxybenzoate carboxy-lyase.